The sequence spans 268 residues: Interferon alpha/beta receptor 2 (268 aa).

The signal sequence occupies residues 1-16; it reads MGPWTLLLLHLPLVVS. Over 17 to 223 the chain is Extracellular; that stretch reads MLPAPTNVSI…TSPTAANTVP (207 aa). Fibronectin type-III domains lie at 18-114 and 115-217; these read LPAP…LTDT and LLGP…TSPT. Intrachain disulfides connect cysteine 65-cysteine 74 and cysteine 191-cysteine 211. The helical transmembrane segment at 224-244 threads the bilayer; that stretch reads VVLSVLCAFSLLVVLLCGIVV. Over 245–268 the chain is Cytoplasmic; that stretch reads YSGRLLCMHKPLPKTLSSVPLCGG.

This sequence belongs to the type II cytokine receptor family. As to quaternary structure, heterodimer with IFNAR1; forming the receptor for type I interferon.

It localises to the cell membrane. The protein resides in the cytoplasm. Together with IFNAR1, forms the heterodimeric receptor for type I interferons (including interferons alpha, beta, epsilon, omega and kappa). Type I interferon binding activates the JAK-STAT signaling cascade, resulting in transcriptional activation or repression of interferon-regulated genes that encode the effectors of the interferon response. Mechanistically, type I interferon-binding brings the IFNAR1 and IFNAR2 subunits into close proximity with one another, driving their associated Janus kinases (JAKs) (TYK2 bound to IFNAR1 and JAK1 bound to IFNAR2) to cross-phosphorylate one another. The activated kinases phosphorylate specific tyrosine residues on the intracellular domains of IFNAR1 and IFNAR2, forming docking sites for the STAT transcription factors (STAT1, STAT2 and STAT). STAT proteins are then phosphorylated by the JAKs, promoting their translocation into the nucleus to regulate expression of interferon-regulated genes. This is Interferon alpha/beta receptor 2 from Oncorhynchus mykiss (Rainbow trout).